A 60-amino-acid polypeptide reads, in one-letter code: Lantibiotic Pep5 (60 aa).

A propeptide spanning residues 1–26 (MKNNKNLFDLEIKKETSQNTDELEPQ) is cleaved from the precursor. Residues 1-29 (MKNNKNLFDLEIKKETSQNTDELEPQTAG) form a disordered region. 2-oxobutanoic acid is present on T27. The lanthionine (Ser-Cys) cross-link spans 35-39 (SVKQC). 2,3-didehydrobutyrine is present on residues T42 and T46. Positions 50-53 (TVSC) form a cross-link, beta-methyllanthionine (Thr-Cys). A cross-link (lanthionine (Ser-Cys)) is located at residues 52 to 59 (SCKGKNGC).

This sequence belongs to the type A lantibiotic family. Maturation of lantibiotics involves the enzymatic conversion of Thr, and Ser into dehydrated AA and the formation of thioether bonds with cysteine. This is followed by membrane translocation and cleavage of the modified precursor. Post-translationally, after proteolysis of the propeptide, the N-terminal 2,3-didehydrobutyrine hydrolyzes to 2-oxobutanoic acid, possibly spontaneously.

Its function is as follows. Lanthionine-containing peptide antibiotic (lantibiotic) active on Gram-positive bacteria. The bactericidal activity of lantibiotics is based on depolarization of energized bacterial cytoplasmic membranes, initiated by the formation of aqueous transmembrane pores. This Staphylococcus epidermidis protein is Lantibiotic Pep5 (pepA).